Reading from the N-terminus, the 530-residue chain is Ubiquitin carboxyl-terminal hydrolase 17-like protein 13 (530 aa).

One can recognise a USP domain in the interval 80–375 (AGLQNMGNTC…QAYVLFYIQK (296 aa)). Cys-89 (nucleophile) is an active-site residue. His-334 serves as the catalytic Proton acceptor. Composition is skewed to basic and acidic residues over residues 382 to 392 (SESVSRGREPR) and 398 to 412 (DTDR…KRDH). Disordered regions lie at residues 382–412 (SESV…KRDH) and 477–530 (NHHP…LVCQ). Over residues 493–505 (TPTHQESMNTGTL) the composition is skewed to polar residues. A compositionally biased stretch (basic residues) spans 510–524 (GRARRSKGKNKHSKR).

Belongs to the peptidase C19 family. USP17 subfamily.

It localises to the nucleus. Its subcellular location is the endoplasmic reticulum. The catalysed reaction is Thiol-dependent hydrolysis of ester, thioester, amide, peptide and isopeptide bonds formed by the C-terminal Gly of ubiquitin (a 76-residue protein attached to proteins as an intracellular targeting signal).. Deubiquitinating enzyme that removes conjugated ubiquitin from specific proteins to regulate different cellular processes that may include cell proliferation, progression through the cell cycle, apoptosis, cell migration, and the cellular response to viral infection. The sequence is that of Ubiquitin carboxyl-terminal hydrolase 17-like protein 13 (USP17L13) from Homo sapiens (Human).